The sequence spans 214 residues: YINYKNMSHQHMLTLFNLLPVGSNISIWWNFGSMLLTCLMIQIATGFFLAIHYTANINLAFSSIIHISRDVPYGWIMQNTHAIGASLFFICIYIHIARGIYYGSYLNKEVWLSGTTLLIILMATAFFGYVLPWGQMSFWAATVITNLLTAIPYLGTTLTTWLWGGYAINDPTLTRFFALHFILPFAIISMSSIHILLLHNEGSNNPLGTNSDID.

The next 4 helical transmembrane spans lie at 31-51, 75-96, 111-131, and 176-196; these read FGSM…FLAI, WIMQ…YIHI, WLSG…GYVL, and FFAL…IHIL. Positions 81 and 95 each coordinate heme b. Heme b-binding residues include His180 and His194. An a ubiquinone-binding site is contributed by His199.

This sequence belongs to the cytochrome b family. As to quaternary structure, the cytochrome bc1 complex contains 3 respiratory subunits (MT-CYB, CYC1 and UQCRFS1), 2 core proteins (UQCRC1 and UQCRC2) and probably 6 low-molecular weight proteins. It depends on heme b as a cofactor.

It is found in the mitochondrion inner membrane. Component of the ubiquinol-cytochrome c reductase complex (complex III or cytochrome b-c1 complex) that is part of the mitochondrial respiratory chain. The b-c1 complex mediates electron transfer from ubiquinol to cytochrome c. Contributes to the generation of a proton gradient across the mitochondrial membrane that is then used for ATP synthesis. The polypeptide is Cytochrome b (MT-CYB) (Agkistrodon contortrix contortrix (Southern copperhead)).